The following is a 359-amino-acid chain: 3-isopropylmalate dehydrogenase (359 aa).

77–88 (GPKWGTGDVRPE) serves as a coordination point for NAD(+). Substrate is bound by residues Arg-95, Arg-105, Arg-134, and Asp-223. Residues Asp-223, Asp-248, and Asp-252 each coordinate Mg(2+). An NAD(+)-binding site is contributed by 287-298 (GSAPDLPAGKVN).

It belongs to the isocitrate and isopropylmalate dehydrogenases family. In terms of assembly, homodimer. Mg(2+) serves as cofactor. Mn(2+) is required as a cofactor.

It is found in the cytoplasm. The enzyme catalyses (2R,3S)-3-isopropylmalate + NAD(+) = 4-methyl-2-oxopentanoate + CO2 + NADH. The protein operates within amino-acid biosynthesis; L-leucine biosynthesis; L-leucine from 3-methyl-2-oxobutanoate: step 3/4. Its function is as follows. Catalyzes the oxidation of 3-carboxy-2-hydroxy-4-methylpentanoate (3-isopropylmalate) to 3-carboxy-4-methyl-2-oxopentanoate. The product decarboxylates to 4-methyl-2 oxopentanoate. The protein is 3-isopropylmalate dehydrogenase (LEU2) of Diutina rugosa (Yeast).